A 396-amino-acid polypeptide reads, in one-letter code: Tyrosine--tRNA ligase (396 aa).

Y36 contacts L-tyrosine. Residues P41–N50 carry the 'HIGH' region motif. L-tyrosine contacts are provided by Y165 and Q169. The 'KMSKS' region motif lies at K225–T229. K228 provides a ligand contact to ATP. The S4 RNA-binding domain occupies T331–V394.

The protein belongs to the class-I aminoacyl-tRNA synthetase family. TyrS type 1 subfamily. As to quaternary structure, homodimer.

Its subcellular location is the cytoplasm. It catalyses the reaction tRNA(Tyr) + L-tyrosine + ATP = L-tyrosyl-tRNA(Tyr) + AMP + diphosphate + H(+). Functionally, catalyzes the attachment of tyrosine to tRNA(Tyr) in a two-step reaction: tyrosine is first activated by ATP to form Tyr-AMP and then transferred to the acceptor end of tRNA(Tyr). In Mycoplasma genitalium (strain ATCC 33530 / DSM 19775 / NCTC 10195 / G37) (Mycoplasmoides genitalium), this protein is Tyrosine--tRNA ligase.